The following is a 449-amino-acid chain: MAQFFKAKPNSSKQLSAKQSFSVHQLDHLGAGIAQHQGKVVFIPGALPNETVQAQLTEQKKNYARAKLIKVETPSAERVTPLCPHYQSCGGCDLQHMSLAGQREHKSAALVDIMAKFAGAEGNSVPALTGEGWHYRRRARLATLFDKNTKQLSLGFRASSSNQVVPIDSCLVLAKPLADLIAPFAKLLNQLAAKSSLGHVELIDADNGHFAVIRITKPLNDKDMAKLAQFAEQHQIHICLQDNNGEFHGVNGTLLLPVYQLLDDNADATPVSLTFTPGNFVQVNAQINKTMVAQALEWLAPQPGERILDLFCGMGNFSLPLAKLGAEVIGVEGVPEMVSQARENAAANGLSNLTFYHGDLSADLSCEPWMGKIDKLLLDPARAGAFESLQWLKKMKPRQVVYVSCNPASLARDSAVLLERGYKLQKLGLIDMFPQTHHIEAMALFELAK.

The region spanning 12 to 70 (SKQLSAKQSFSVHQLDHLGAGIAQHQGKVVFIPGALPNETVQAQLTEQKKNYARAKLIK) is the TRAM domain. Cysteine 83, cysteine 89, cysteine 92, and cysteine 170 together coordinate [4Fe-4S] cluster. S-adenosyl-L-methionine contacts are provided by glutamine 282, phenylalanine 311, asparagine 316, glutamate 332, aspartate 359, and aspartate 379. The active-site Nucleophile is the cysteine 405.

Belongs to the class I-like SAM-binding methyltransferase superfamily. RNA M5U methyltransferase family. RlmD subfamily.

It catalyses the reaction uridine(1939) in 23S rRNA + S-adenosyl-L-methionine = 5-methyluridine(1939) in 23S rRNA + S-adenosyl-L-homocysteine + H(+). Its function is as follows. Catalyzes the formation of 5-methyl-uridine at position 1939 (m5U1939) in 23S rRNA. The chain is 23S rRNA (uracil(1939)-C(5))-methyltransferase RlmD from Shewanella sp. (strain ANA-3).